The chain runs to 93 residues: Acylphosphatase (93 aa).

The 88-residue stretch at 6–93 (RAHILVSGEV…GDLGPFSVRH (88 aa)) folds into the Acylphosphatase-like domain. Residues Arg21 and Asn39 contribute to the active site.

Belongs to the acylphosphatase family.

It catalyses the reaction an acyl phosphate + H2O = a carboxylate + phosphate + H(+). The chain is Acylphosphatase (acyP) from Anaeromyxobacter sp. (strain Fw109-5).